Consider the following 52-residue polypeptide: MEAVKEKNELFDLDVKVNAKESNDSGAEPRIASKFLCTPGCAKTGSFNSYCC.

The propeptide occupies 1–30 (MEAVKEKNELFDLDVKVNAKESNDSGAEPR). Positions 33 to 37 (SKFLC) form a cross-link, lanthionine (Ser-Cys). Residues 38 to 41 (TPGC) constitute a cross-link (beta-methyllanthionine (Thr-Cys)). Thr-44 is modified ((Z)-2,3-didehydrobutyrine). Residues 46–51 (SFNSYC) constitute a cross-link (lanthionine (Ser-Cys)). The segment at residues 49–52 (SYCC) is a cross-link (S-(2-aminovinyl)-D-cysteine (Ser-Cys)).

Belongs to the type A lantibiotic family. Post-translationally, maturation of lantibiotics involves the enzymatic conversion of Thr, and Ser into dehydrated AA and the formation of thioether bonds with cysteine. The C-terminal lanthionine undergoes decarboxylation. This is followed by membrane translocation and cleavage of the modified precursor. The structure of the 2,3-didehydrobutyrine is not discussed in PubMed:1932575. However, in Fig. 5 the NMR model appears to have the Z-isomer.

Functionally, lanthionine-containing peptide antibiotic (lantibiotic) active on Gram-positive bacteria. The bactericidal activity of lantibiotics is based on depolarization of energized bacterial cytoplasmic membranes, initiated by the formation of aqueous transmembrane pores. The polypeptide is Lantibiotic gallidermin (gdmA) (Staphylococcus gallinarum).